The primary structure comprises 224 residues: 7-cyano-7-deazaguanine synthase (224 aa).

Position 8-18 (8-18) interacts with ATP; it reads CSGGLDSTVAA. C190, C198, C201, and C204 together coordinate Zn(2+).

The protein belongs to the QueC family. The cofactor is Zn(2+).

It carries out the reaction 7-carboxy-7-deazaguanine + NH4(+) + ATP = 7-cyano-7-deazaguanine + ADP + phosphate + H2O + H(+). It functions in the pathway purine metabolism; 7-cyano-7-deazaguanine biosynthesis. Its function is as follows. Catalyzes the ATP-dependent conversion of 7-carboxy-7-deazaguanine (CDG) to 7-cyano-7-deazaguanine (preQ(0)). The polypeptide is 7-cyano-7-deazaguanine synthase (Methanothrix thermoacetophila (strain DSM 6194 / JCM 14653 / NBRC 101360 / PT) (Methanosaeta thermophila)).